A 155-amino-acid chain; its full sequence is Ribonuclease H (155 aa).

The region spanning 4–145 (QQKVVEIYTD…ADALARKAIA (142 aa)) is the RNase H type-1 domain. Positions 13, 51, 73, and 137 each coordinate Mg(2+).

This sequence belongs to the RNase H family. In terms of assembly, monomer. Mg(2+) is required as a cofactor.

The protein localises to the cytoplasm. The catalysed reaction is Endonucleolytic cleavage to 5'-phosphomonoester.. In terms of biological role, endonuclease that specifically degrades the RNA of RNA-DNA hybrids. The sequence is that of Ribonuclease H from Bartonella tribocorum (strain CIP 105476 / IBS 506).